The chain runs to 554 residues: Glutamine--tRNA ligase (554 aa).

The 'HIGH' region motif lies at 34–44; it reads PEPNGYLHIGH. Residues 35–37 and 41–47 contribute to the ATP site; these read EPN and HIGHAKS. L-glutamine-binding residues include Asp67 and Tyr212. ATP contacts are provided by residues Thr231, 261-262, and 269-271; these read RL and MSK. The short motif at 268–272 is the 'KMSKS' region element; it reads VMSKR. The interval 317 to 324 is interaction with tRNA; it reads TKQDNTIE.

Belongs to the class-I aminoacyl-tRNA synthetase family. In terms of assembly, monomer.

It localises to the cytoplasm. It catalyses the reaction tRNA(Gln) + L-glutamine + ATP = L-glutaminyl-tRNA(Gln) + AMP + diphosphate. This chain is Glutamine--tRNA ligase, found in Escherichia coli O127:H6 (strain E2348/69 / EPEC).